Reading from the N-terminus, the 419-residue chain is Serine hydroxymethyltransferase (419 aa).

(6S)-5,6,7,8-tetrahydrofolate contacts are provided by residues L122 and 126-128; that span reads GHL. At K231 the chain carries N6-(pyridoxal phosphate)lysine. 354–356 contributes to the (6S)-5,6,7,8-tetrahydrofolate binding site; sequence SPF.

It belongs to the SHMT family. As to quaternary structure, homodimer. It depends on pyridoxal 5'-phosphate as a cofactor.

Its subcellular location is the cytoplasm. The catalysed reaction is (6R)-5,10-methylene-5,6,7,8-tetrahydrofolate + glycine + H2O = (6S)-5,6,7,8-tetrahydrofolate + L-serine. The protein operates within one-carbon metabolism; tetrahydrofolate interconversion. Its pathway is amino-acid biosynthesis; glycine biosynthesis; glycine from L-serine: step 1/1. In terms of biological role, catalyzes the reversible interconversion of serine and glycine with tetrahydrofolate (THF) serving as the one-carbon carrier. This reaction serves as the major source of one-carbon groups required for the biosynthesis of purines, thymidylate, methionine, and other important biomolecules. Also exhibits THF-independent aldolase activity toward beta-hydroxyamino acids, producing glycine and aldehydes, via a retro-aldol mechanism. This chain is Serine hydroxymethyltransferase, found in Exiguobacterium sibiricum (strain DSM 17290 / CCUG 55495 / CIP 109462 / JCM 13490 / 255-15).